A 504-amino-acid polypeptide reads, in one-letter code: UDP-N-acetylmuramoylalanine--D-glutamate ligase (504 aa).

129 to 135 contributes to the ATP binding site; it reads GTNGKTT.

It belongs to the MurCDEF family.

It localises to the cytoplasm. The catalysed reaction is UDP-N-acetyl-alpha-D-muramoyl-L-alanine + D-glutamate + ATP = UDP-N-acetyl-alpha-D-muramoyl-L-alanyl-D-glutamate + ADP + phosphate + H(+). The protein operates within cell wall biogenesis; peptidoglycan biosynthesis. Cell wall formation. Catalyzes the addition of glutamate to the nucleotide precursor UDP-N-acetylmuramoyl-L-alanine (UMA). In Burkholderia thailandensis (strain ATCC 700388 / DSM 13276 / CCUG 48851 / CIP 106301 / E264), this protein is UDP-N-acetylmuramoylalanine--D-glutamate ligase.